The following is a 585-amino-acid chain: Lipoprotein LpqB (585 aa).

The first 17 residues, M1 to G17, serve as a signal peptide directing secretion. C18 carries N-palmitoyl cysteine lipidation. A lipid anchor (S-diacylglycerol cysteine) is attached at C18. Disordered stretches follow at residues S24–P46 and P560–G585.

Belongs to the LpqB lipoprotein family.

It is found in the cell membrane. This Mycobacterium paratuberculosis protein is Lipoprotein LpqB.